Reading from the N-terminus, the 318-residue chain is Ficolin-1-B (318 aa).

The first 19 residues, 1 to 19 (MTRWVQTFLLLVAVIRSYA), serve as a signal peptide directing secretion. Residues 42 to 99 (GCPGIPGVPGPQGPSGPAGAKGEKGFPGIPGKMGPTGLKGERGISGPKGQKGDKGDPG) form the Collagen-like domain. Positions 100–318 (IPVVGMAQNC…VSEIKFRPQP (219 aa)) constitute a Fibrinogen C-terminal domain. The cysteines at positions 109 and 137 are disulfide-linked. N-linked (GlcNAc...) asparagine glycosylation is found at N205 and N222. D253 provides a ligand contact to Ca(2+). The N-linked (GlcNAc...) asparagine glycan is linked to N254. Positions 255 and 257 each coordinate Ca(2+). An intrachain disulfide couples C261 to C274. 273-275 (SCH) lines the a carbohydrate pocket. N287 carries N-linked (GlcNAc...) asparagine glycosylation.

Belongs to the ficolin lectin family. Homotrimer. May form higher-order oligomers. N-glycosylated. As to expression, expressed in peripheral blood leukocytes. Also detected at lower levels in spleen and lung.

It is found in the secreted. Functionally, may function in innate immunity through activation of the lectin complement pathway. Binds to GalNAc and GlcNAc carbohydrate moieties. This Xenopus laevis (African clawed frog) protein is Ficolin-1-B.